Reading from the N-terminus, the 397-residue chain is Imidazolonepropionase (397 aa).

2 residues coordinate Fe(3+): H66 and H68. Zn(2+) is bound by residues H66 and H68. The 4-imidazolone-5-propanoate site is built by R75, Y138, and H171. Y138 provides a ligand contact to N-formimidoyl-L-glutamate. H236 serves as a coordination point for Fe(3+). Zn(2+) is bound at residue H236. Q239 contributes to the 4-imidazolone-5-propanoate binding site. A Fe(3+)-binding site is contributed by D311. D311 contacts Zn(2+). The N-formimidoyl-L-glutamate site is built by N313 and G315. S316 lines the 4-imidazolone-5-propanoate pocket.

It belongs to the metallo-dependent hydrolases superfamily. HutI family. Requires Zn(2+) as cofactor. Fe(3+) is required as a cofactor.

The protein localises to the cytoplasm. It catalyses the reaction 4-imidazolone-5-propanoate + H2O = N-formimidoyl-L-glutamate. It participates in amino-acid degradation; L-histidine degradation into L-glutamate; N-formimidoyl-L-glutamate from L-histidine: step 3/3. Functionally, catalyzes the hydrolytic cleavage of the carbon-nitrogen bond in imidazolone-5-propanoate to yield N-formimidoyl-L-glutamate. It is the third step in the universal histidine degradation pathway. The sequence is that of Imidazolonepropionase from Roseobacter denitrificans (strain ATCC 33942 / OCh 114) (Erythrobacter sp. (strain OCh 114)).